The following is a 153-amino-acid chain: Insulin-like growth factor 1 (153 aa).

Residues 49–77 (GPETLCGAELVDALQFVCGDRGFYFNKPT) form a b region. 3 disulfide bridges follow: Cys54–Cys96, Cys66–Cys109, and Cys95–Cys100. The interval 78 to 89 (GYGSSSRRAPQT) is c. Residues 90–110 (GIVDECCFRSCDLRRLEMYCA) are a. Positions 111–118 (PLKPAKSA) are d. The propeptide at 119–153 (RSVRAQRHTDMPKAQKEVHLKNASRGSAGNKNYRM) is e peptide. The disordered stretch occupies residues 120–153 (SVRAQRHTDMPKAQKEVHLKNASRGSAGNKNYRM). The span at 125-138 (RHTDMPKAQKEVHL) shows a compositional bias: basic and acidic residues. Over residues 142–153 (SRGSAGNKNYRM) the composition is skewed to polar residues.

It belongs to the insulin family. As to quaternary structure, forms a ternary complex with IGFR1 and ITGAV:ITGB3. Forms a ternary complex with IGFR1 and ITGA6:ITGB4. Forms a ternary complex with IGFBP3 and ALS.

It localises to the secreted. Its function is as follows. The insulin-like growth factors, isolated from plasma, are structurally and functionally related to insulin but have a much higher growth-promoting activity. May be a physiological regulator of [1-14C]-2-deoxy-D-glucose (2DG) transport and glycogen synthesis in osteoblasts. Stimulates glucose transport in bone-derived osteoblastic (PyMS) cells and is effective at much lower concentrations than insulin, not only regarding glycogen and DNA synthesis but also with regard to enhancing glucose uptake. May play a role in synapse maturation. Ca(2+)-dependent exocytosis of IGF1 is required for sensory perception of smell in the olfactory bulb. Acts as a ligand for IGF1R. Binds to the alpha subunit of IGF1R, leading to the activation of the intrinsic tyrosine kinase activity which autophosphorylates tyrosine residues in the beta subunit thus initiating a cascade of down-stream signaling events leading to activation of the PI3K-AKT/PKB and the Ras-MAPK pathways. Binds to integrins ITGAV:ITGB3 and ITGA6:ITGB4. Its binding to integrins and subsequent ternary complex formation with integrins and IGFR1 are essential for IGF1 signaling. Induces the phosphorylation and activation of IGFR1, MAPK3/ERK1, MAPK1/ERK2 and AKT1. As part of the MAPK/ERK signaling pathway, acts as a negative regulator of apoptosis in cardiomyocytes via promotion of STUB1/CHIP-mediated ubiquitination and degradation of ICER-type isoforms of CREM. The protein is Insulin-like growth factor 1 of Canis lupus familiaris (Dog).